A 144-amino-acid polypeptide reads, in one-letter code: Phospholipase A2, membrane associated (144 aa).

The first 20 residues, 1–20 (MKTLLLLAVIMIFGLLQAHG), serve as a signal peptide directing secretion. 7 disulfide bridges follow: Cys46-Cys137, Cys48-Cys64, Cys63-Cys117, Cys69-Cys144, Cys70-Cys110, Cys79-Cys103, and Cys97-Cys108. His47, Gly49, and Gly51 together coordinate Ca(2+). The active site involves His67. Asp68 contributes to the Ca(2+) binding site. Residue Asp111 is part of the active site.

It belongs to the phospholipase A2 family. Ca(2+) serves as cofactor. Expressed in various tissues including heart, kidney, liver, lung, pancreas, placenta, skeletal muscle, prostate, ovary, colon and small intestine. Not detected in lymphoid organs and brain. Expressed in platelets (at protein level).

Its subcellular location is the secreted. The protein localises to the cell membrane. The protein resides in the mitochondrion outer membrane. It catalyses the reaction a 1,2-diacyl-sn-glycero-3-phosphoethanolamine + H2O = a 1-acyl-sn-glycero-3-phosphoethanolamine + a fatty acid + H(+). The catalysed reaction is 1-hexadecanoyl-2-(9Z-octadecenoyl)-sn-glycero-3-phosphoethanolamine + H2O = 1-hexadecanoyl-sn-glycero-3-phosphoethanolamine + (9Z)-octadecenoate + H(+). It carries out the reaction 1-hexadecanoyl-2-(9Z,12Z-octadecadienoyl)-sn-glycero-3-phosphoethanolamine + H2O = 1-hexadecanoyl-sn-glycero-3-phosphoethanolamine + (9Z,12Z)-octadecadienoate + H(+). The enzyme catalyses 1-hexadecanoyl-2-(5Z,8Z,11Z,14Z-eicosatetraenoyl)-sn-glycero-3-phosphoethanolamine + H2O = 1-hexadecanoyl-sn-glycero-3-phosphoethanolamine + (5Z,8Z,11Z,14Z)-eicosatetraenoate + H(+). It catalyses the reaction N-hexadecanoyl-1,2-di-(9Z-octadecenoyl)-sn-glycero-3-phosphoethanolamine + H2O = N-hexadecanoyl-1-(9Z-octadecenoyl)-sn-glycero-3-phosphoethanolamine + (9Z)-octadecenoate + H(+). The catalysed reaction is 1,2-dihexadecanoyl-sn-glycero-3-phospho-(1'-sn-glycerol) + H2O = 1-hexadecanoyl-sn-glycero-3-phospho-(1'-sn-glycerol) + hexadecanoate + H(+). It carries out the reaction 1-hexadecanoyl-2-(9Z-octadecenoyl)-sn-glycero-3-phosphoglycerol + H2O = 1-hexadecanoyl-sn-glycero-3-phosphoglycerol + (9Z)-octadecenoate + H(+). The enzyme catalyses 1-hexadecanoyl-2-(9Z-octadecenoyl)-sn-glycero-3-phospho-(1'-sn-glycerol) + H2O = 1-hexadecanoyl-sn-glycero-3-phospho-(1'-sn-glycerol) + (9Z)-octadecenoate + H(+). It catalyses the reaction a 1,2-diacyl-sn-glycero-3-phosphocholine + H2O = a 1-acyl-sn-glycero-3-phosphocholine + a fatty acid + H(+). The catalysed reaction is 1,2-dihexadecanoyl-sn-glycero-3-phosphocholine + H2O = 1-hexadecanoyl-sn-glycero-3-phosphocholine + hexadecanoate + H(+). It carries out the reaction 1-hexadecanoyl-2-(9Z-octadecenoyl)-sn-glycero-3-phosphocholine + H2O = 1-hexadecanoyl-sn-glycero-3-phosphocholine + (9Z)-octadecenoate + H(+). The enzyme catalyses 1-hexadecanoyl-2-(9Z,12Z-octadecadienoyl)-sn-glycero-3-phosphocholine + H2O = (9Z,12Z)-octadecadienoate + 1-hexadecanoyl-sn-glycero-3-phosphocholine + H(+). It catalyses the reaction 1-hexadecanoyl-2-(4Z,7Z,10Z,13Z,16Z,19Z-docosahexaenoyl)-sn-glycero-3-phosphocholine + H2O = (4Z,7Z,10Z,13Z,16Z,19Z)-docosahexaenoate + 1-hexadecanoyl-sn-glycero-3-phosphocholine + H(+). Its function is as follows. Secretory calcium-dependent phospholipase A2 that primarily targets extracellular phospholipids with implications in host antimicrobial defense, inflammatory response and tissue regeneration. Hydrolyzes the ester bond of the fatty acyl group attached at sn-2 position of phospholipids (phospholipase A2 activity) with preference for phosphatidylethanolamines and phosphatidylglycerols over phosphatidylcholines. Contributes to lipid remodeling of cellular membranes and generation of lipid mediators involved in pathogen clearance. Displays bactericidal activity against Gram-positive bacteria by directly hydrolyzing phospholipids of the bacterial membrane. Upon sterile inflammation, targets membrane phospholipids of extracellular mitochondria released from activated platelets, generating free unsaturated fatty acids such as arachidonate that is used by neighboring leukocytes to synthesize inflammatory eicosanoids such as leukotrienes. Simultaneously, by compromising mitochondrial membrane integrity, promotes the release in circulation of potent damage-associated molecular pattern molecules that activate the innate immune response. Plays a stem cell regulator role in the intestinal crypt. Within intracellular compartment mediates Paneth cell differentiation and its stem cell supporting functions by inhibiting Wnt signaling pathway in intestinal stem cell (ICS). Secreted in the intestinal lumen upon inflammation, acts in an autocrine way and promotes prostaglandin E2 synthesis that stimulates Wnt signaling pathway in ICS cells and tissue regeneration. May play a role in the biosynthesis of N-acyl ethanolamines that regulate energy metabolism and inflammation. Hydrolyzes N-acyl phosphatidylethanolamines to N-acyl lysophosphatidylethanolamines, which are further cleaved by a lysophospholipase D to release N-acyl ethanolamines. Independent of its catalytic activity, acts as a ligand for integrins. Binds to and activates integrins ITGAV:ITGB3, ITGA4:ITGB1 and ITGA5:ITGB1. Binds to a site (site 2) which is distinct from the classical ligand-binding site (site 1) and induces integrin conformational changes and enhanced ligand binding to site 1. Induces cell proliferation in an integrin-dependent manner. The chain is Phospholipase A2, membrane associated (PLA2G2A) from Homo sapiens (Human).